A 693-amino-acid chain; its full sequence is DNA-directed RNA polymerase subunit beta' (693 aa).

Zn(2+)-binding residues include Cys76, Cys78, Cys94, and Cys97. Residues Asp496, Asp498, and Asp500 each contribute to the Mg(2+) site.

This sequence belongs to the RNA polymerase beta' chain family. RpoC1 subfamily. In terms of assembly, in plastids the minimal PEP RNA polymerase catalytic core is composed of four subunits: alpha, beta, beta', and beta''. When a (nuclear-encoded) sigma factor is associated with the core the holoenzyme is formed, which can initiate transcription. Mg(2+) serves as cofactor. Zn(2+) is required as a cofactor.

The protein resides in the plastid. The protein localises to the chloroplast. It catalyses the reaction RNA(n) + a ribonucleoside 5'-triphosphate = RNA(n+1) + diphosphate. Its function is as follows. DNA-dependent RNA polymerase catalyzes the transcription of DNA into RNA using the four ribonucleoside triphosphates as substrates. This is DNA-directed RNA polymerase subunit beta' from Nuphar advena (Common spatterdock).